A 317-amino-acid chain; its full sequence is MARGLDLAPLLLLLLAMATRFCTAQSNCTCPTNKMTVCDTNGPGGVCQCRAMGSQVLVDCSTLTSKCLLLKARMSARKSGRSLVMPSEHAILDNDGLYDPECDDKGRFKARQCNQTSVCWCVNSVGVRRTDKGDQSLRCDEVVRTHHILIELRHRPTDRAFNHSDLDSELRRLFQERYKLHPSFLSAVHYEEPTIQIELRQNASQKGLRDVDIADAAYYFERDIKGESLFMGRRGLDVQVRGEPLHVERTLIYYLDEKPPQFSMKRLTAGVIAVIAVVSVAVVAGVVVLVVTKRRKSGKYKKVELKELGEMRSEPSL.

Positions 1–24 (MARGLDLAPLLLLLLAMATRFCTA) are cleaved as a signal peptide. The Extracellular segment spans residues 25–270 (QSNCTCPTNK…QFSMKRLTAG (246 aa)). N-linked (GlcNAc...) asparagine glycosylation occurs at N27. Positions 64 to 139 (TSKCLLLKAR…TDKGDQSLRC (76 aa)) constitute a Thyroglobulin type-1 domain. 3 disulfides stabilise this stretch: C67-C102, C113-C119, and C121-C139. The N-linked (GlcNAc...) asparagine glycan is linked to N114. 2 N-linked (GlcNAc...) asparagine glycosylation sites follow: N162 and N202. A helical membrane pass occupies residues 271-291 (VIAVIAVVSVAVVAGVVVLVV). At 292 to 317 (TKRRKSGKYKKVELKELGEMRSEPSL) the chain is on the cytoplasmic side.

This sequence belongs to the EPCAM family. As to expression, expressed in kidney, lung, ovary and testis. High levels of expression in immortalized keratinocytes.

It is found in the membrane. In terms of biological role, may function as a growth factor receptor. This is Tumor-associated calcium signal transducer 2 (Tacstd2) from Mus musculus (Mouse).